The following is a 370-amino-acid chain: Cytochrome b (370 aa).

4 helical membrane-spanning segments follow: residues 25 to 45, 69 to 90, 105 to 125, and 170 to 190; these read FGSMLLACLTLQLLTGFFLAV, WMMQNLHAIGASMFFICIYIHI, WLSGTTLLIMLMATAFFGYVL, and FFALHFILPFGIISLSSLHIL. Heme b is bound by residues His-75 and His-89. Heme b contacts are provided by His-174 and His-188. Residue His-193 participates in a ubiquinone binding. 4 helical membrane passes run 218-238, 280-300, 312-332, and 339-358; these read YKDMLMLTIMTIMLLTIVSFF, LGGALALTMSIMMLLTLPFTH, LMQLTFWTFTATFLVISWTAT, and FTTISQVAALMYFLFFISNP.

It belongs to the cytochrome b family. The cytochrome bc1 complex contains 3 respiratory subunits (MT-CYB, CYC1 and UQCRFS1), 2 core proteins (UQCRC1 and UQCRC2) and probably 6 low-molecular weight proteins. Requires heme b as cofactor.

The protein localises to the mitochondrion inner membrane. Component of the ubiquinol-cytochrome c reductase complex (complex III or cytochrome b-c1 complex) that is part of the mitochondrial respiratory chain. The b-c1 complex mediates electron transfer from ubiquinol to cytochrome c. Contributes to the generation of a proton gradient across the mitochondrial membrane that is then used for ATP synthesis. The polypeptide is Cytochrome b (MT-CYB) (Chilabothrus strigilatus strigilatus (New Providence boa constrictor)).